Consider the following 81-residue polypeptide: Antimicrobial peptide D1 (81 aa).

The signal sequence occupies residues 1 to 31 (MAKTVLGIHVTFLTLLFAVLLLNDVMYTPVE). 4 cysteine pairs are disulfide-bonded: Cys34–Cys81, Cys45–Cys66, Cys51–Cys75, and Cys55–Cys77.

Its function is as follows. Antimicrobial peptide probably active against fungi like B.sorokiniana, F.oxysporum, F.graminearum, F.avenaceum, B.cinerea, P.beta, P.infestans and P.debaryanum. This is Antimicrobial peptide D1 from Stellaria media (Common chickweed).